The sequence spans 153 residues: Fucose mutarotase (153 aa).

His-24 serves as the catalytic Proton donor. Asp-32 is a binding site for substrate. The active site involves Asp-69. Positions 79, 119, 137, and 139 each coordinate substrate. The active site involves Tyr-119.

This sequence belongs to the RbsD / FucU family. As to quaternary structure, mainly homodimer, but also exists as homotetramer, homooctamer, and homodecamer. The homodimeric form seems catalytically inactive.

The catalysed reaction is alpha-L-fucose = beta-L-fucose. It participates in carbohydrate metabolism; L-fucose metabolism. Functionally, involved in the interconversion between alpha- and beta-L-fucoses. L-Fucose (6-deoxy-L-galactose) exists as alpha-L-fucose (29.5%) and beta-L-fucose (70.5%), the beta-form is metabolized through the salvage pathway. GDP-L-fucose formed either by the de novo or salvage pathways is transported into the endoplasmic reticulum, where it serves as a substrate for N- and O-glycosylations by fucosyltransferases. Fucosylated structures expressed on cell surfaces or secreted in biological fluids are believed to play a critical role in cell-cell adhesion and recognition processes. The polypeptide is Fucose mutarotase (FUOM) (Bos taurus (Bovine)).